The primary structure comprises 366 residues: Putative integrase/recombinase HI_1572 (366 aa).

In terms of domain architecture, Core-binding (CB) spans 54 to 133 (ITLDELIDKY…SLSALMAKTI (80 aa)). Residues 168–331 (IFVSGYDVEH…DMAEGYKTKA (164 aa)) enclose the Tyr recombinase domain. Catalysis depends on residues R201, K226, and H308. The active-site O-(3'-phospho-DNA)-tyrosine intermediate is the Y318.

This sequence belongs to the 'phage' integrase family.

The chain is Putative integrase/recombinase HI_1572 from Haemophilus influenzae (strain ATCC 51907 / DSM 11121 / KW20 / Rd).